Here is a 234-residue protein sequence, read N- to C-terminus: 7-cyano-7-deazaguanine synthase (234 aa).

ATP is bound at residue 13 to 23; sequence LSGGQDSTTCL. 4 residues coordinate Zn(2+): cysteine 193, cysteine 201, cysteine 204, and cysteine 207.

The protein belongs to the QueC family. Requires Zn(2+) as cofactor.

It carries out the reaction 7-carboxy-7-deazaguanine + NH4(+) + ATP = 7-cyano-7-deazaguanine + ADP + phosphate + H2O + H(+). It functions in the pathway purine metabolism; 7-cyano-7-deazaguanine biosynthesis. In terms of biological role, catalyzes the ATP-dependent conversion of 7-carboxy-7-deazaguanine (CDG) to 7-cyano-7-deazaguanine (preQ(0)). The polypeptide is 7-cyano-7-deazaguanine synthase (Chromobacterium violaceum (strain ATCC 12472 / DSM 30191 / JCM 1249 / CCUG 213 / NBRC 12614 / NCIMB 9131 / NCTC 9757 / MK)).